The primary structure comprises 185 residues: Large ribosomal subunit protein bL25 (185 aa).

Belongs to the bacterial ribosomal protein bL25 family. CTC subfamily. As to quaternary structure, part of the 50S ribosomal subunit; part of the 5S rRNA/L5/L18/L25 subcomplex. Contacts the 5S rRNA. Binds to the 5S rRNA independently of L5 and L18.

In terms of biological role, this is one of the proteins that binds to the 5S RNA in the ribosome where it forms part of the central protuberance. This is Large ribosomal subunit protein bL25 from Laribacter hongkongensis (strain HLHK9).